Consider the following 143-residue polypeptide: Nucleoside diphosphate kinase (143 aa).

ATP-binding residues include K11, F59, R87, T93, R104, and N114. The Pros-phosphohistidine intermediate role is filled by H117.

Belongs to the NDK family. Homotetramer. It depends on Mg(2+) as a cofactor.

The protein resides in the cytoplasm. The catalysed reaction is a 2'-deoxyribonucleoside 5'-diphosphate + ATP = a 2'-deoxyribonucleoside 5'-triphosphate + ADP. It catalyses the reaction a ribonucleoside 5'-diphosphate + ATP = a ribonucleoside 5'-triphosphate + ADP. Functionally, major role in the synthesis of nucleoside triphosphates other than ATP. The ATP gamma phosphate is transferred to the NDP beta phosphate via a ping-pong mechanism, using a phosphorylated active-site intermediate. This chain is Nucleoside diphosphate kinase, found in Shewanella piezotolerans (strain WP3 / JCM 13877).